Reading from the N-terminus, the 100-residue chain is Ubiquitin-related modifier 1 homolog (100 aa).

The residue at position 100 (Gly-100) is a 1-thioglycine. Gly-100 participates in a covalent cross-link: Glycyl lysine isopeptide (Gly-Lys) (interchain with K-? in acceptor proteins).

This sequence belongs to the URM1 family. In terms of processing, C-terminal thiocarboxylation occurs in 2 steps, it is first acyl-adenylated (-COAMP) via the hesA/moeB/thiF part of the MOCS3 homolog, then thiocarboxylated (-COSH) via the rhodanese domain of the MOCS3 homolog.

It is found in the cytoplasm. It functions in the pathway tRNA modification; 5-methoxycarbonylmethyl-2-thiouridine-tRNA biosynthesis. Functionally, acts as a sulfur carrier required for 2-thiolation of mcm(5)S(2)U at tRNA wobble positions of cytosolic tRNA(Lys), tRNA(Glu) and tRNA(Gln). Serves as sulfur donor in tRNA 2-thiolation reaction by being thiocarboxylated (-COSH) at its C-terminus by MOCS3. The sulfur is then transferred to tRNA to form 2-thiolation of mcm(5)S(2)U. Also acts as a ubiquitin-like protein (UBL) that is covalently conjugated via an isopeptide bond to lysine residues of target proteins. The thiocarboxylated form serves as substrate for conjugation and oxidative stress specifically induces the formation of UBL-protein conjugates. This is Ubiquitin-related modifier 1 homolog from Caenorhabditis elegans.